Reading from the N-terminus, the 178-residue chain is Oligoribonuclease (178 aa).

One can recognise an Exonuclease domain in the interval 7–168 (LIWIDLEMTG…DDIRESIAEL (162 aa)). The active site involves Y128.

Belongs to the oligoribonuclease family.

Its subcellular location is the cytoplasm. Functionally, 3'-to-5' exoribonuclease specific for small oligoribonucleotides. The sequence is that of Oligoribonuclease from Pseudomonas syringae pv. syringae (strain B728a).